Reading from the N-terminus, the 375-residue chain is MEFDVVVVGAGPAGSVAAWAAAEAGCDVLILERKAEIGVPKQCAEGISARALEEVGIRPDDGWIAAEIERGILSLPSGSKFEVEVEGYVLERRVFDKWLVVRAVEAGAEVELLAHARRALLDEGRVVGVEYEGEDGVHEVRARIVIAADGIESRIGRTAGLVPQLEPDHICTCAQYEVVGDRYDPKAFMIHFDPERIPGGYAWVFPKGENRANVGVGIRGSESSPGLALKTLDELVEGPLSELVAGTPVEVNVGGVPVCGPVERTYGDGILLVGDAARQVNPLTGGGLNTALICGRIAGEVAVEAIEEDDTSASFLKRYQDRWEEEFRDTFECAREVAEMLPELDLKEVVEFLSSVENLEEMLRTSGILEDVWWG.

FAD contacts are provided by Ala-13, Glu-32, Cys-43, Ala-44, Gly-46, Arg-92, Ala-116, Asp-275, Gly-287, and Leu-288. Gly-367 provides a ligand contact to a 2,3-bis-O-(geranylgeranyl)-sn-glycerol 1-phospholipid.

This sequence belongs to the geranylgeranyl reductase family. DGGGPL reductase subfamily. Requires FAD as cofactor.

The catalysed reaction is a 2,3-bis-O-phytanyl-sn-glycerol 1-phospholipid + 8 A = a 2,3-bis-O-(geranylgeranyl)-sn-glycerol 1-phospholipid + 8 AH2. It carries out the reaction 2,3-bis-O-(phytanyl)-sn-glycerol 1-phosphate + 8 A = 2,3-bis-O-(geranylgeranyl)-sn-glycerol 1-phosphate + 8 AH2. It catalyses the reaction CDP-2,3-bis-O-(geranylgeranyl)-sn-glycerol + 8 AH2 = CDP-2,3-bis-O-(phytanyl)-sn-glycerol + 8 A. The enzyme catalyses archaetidylserine + 8 AH2 = 2,3-bis-O-phytanyl-sn-glycero-3-phospho-L-serine + 8 A. The protein operates within membrane lipid metabolism; glycerophospholipid metabolism. Functionally, is involved in the reduction of 2,3-digeranylgeranylglycerophospholipids (unsaturated archaeols) into 2,3-diphytanylglycerophospholipids (saturated archaeols) in the biosynthesis of archaeal membrane lipids. Catalyzes the formation of archaetidic acid (2,3-di-O-phytanyl-sn-glyceryl phosphate) from 2,3-di-O-geranylgeranylglyceryl phosphate (DGGGP) via the hydrogenation of each double bond of the isoprenoid chains. Is also probably able to reduce double bonds of geranyl groups in CDP-2,3-bis-O-(geranylgeranyl)-sn-glycerol and archaetidylserine, thus acting at various stages in the biosynthesis of archaeal membrane lipids. This is Digeranylgeranylglycerophospholipid reductase 1 from Methanopyrus kandleri (strain AV19 / DSM 6324 / JCM 9639 / NBRC 100938).